Here is a 194-residue protein sequence, read N- to C-terminus: dCTP deaminase, dUMP-forming (194 aa).

Residues 104–109 (RSSLGR), aspartate 122, 130–132 (TLE), glutamine 151, tyrosine 165, lysine 172, and glutamine 176 each bind dCTP. The Proton donor/acceptor role is filled by glutamate 132.

This sequence belongs to the dCTP deaminase family. In terms of assembly, homotrimer.

It carries out the reaction dCTP + 2 H2O = dUMP + NH4(+) + diphosphate. Its pathway is pyrimidine metabolism; dUMP biosynthesis; dUMP from dCTP: step 1/1. In terms of biological role, bifunctional enzyme that catalyzes both the deamination of dCTP to dUTP and the hydrolysis of dUTP to dUMP without releasing the toxic dUTP intermediate. The polypeptide is dCTP deaminase, dUMP-forming (Dictyoglomus thermophilum (strain ATCC 35947 / DSM 3960 / H-6-12)).